Here is a 173-residue protein sequence, read N- to C-terminus: ATP synthase subunit b (173 aa).

A helical membrane pass occupies residues 12–32 (LDVNPGLVVWTLITFLVVVLV).

This sequence belongs to the ATPase B chain family. In terms of assembly, F-type ATPases have 2 components, F(1) - the catalytic core - and F(0) - the membrane proton channel. F(1) has five subunits: alpha(3), beta(3), gamma(1), delta(1), epsilon(1). F(0) has three main subunits: a(1), b(2) and c(10-14). The alpha and beta chains form an alternating ring which encloses part of the gamma chain. F(1) is attached to F(0) by a central stalk formed by the gamma and epsilon chains, while a peripheral stalk is formed by the delta and b chains.

It is found in the cell inner membrane. F(1)F(0) ATP synthase produces ATP from ADP in the presence of a proton or sodium gradient. F-type ATPases consist of two structural domains, F(1) containing the extramembraneous catalytic core and F(0) containing the membrane proton channel, linked together by a central stalk and a peripheral stalk. During catalysis, ATP synthesis in the catalytic domain of F(1) is coupled via a rotary mechanism of the central stalk subunits to proton translocation. Its function is as follows. Component of the F(0) channel, it forms part of the peripheral stalk, linking F(1) to F(0). This Leptospira borgpetersenii serovar Hardjo-bovis (strain JB197) protein is ATP synthase subunit b.